Reading from the N-terminus, the 801-residue chain is Transducin beta-like protein 3 (801 aa).

An N-acetylalanine modification is found at Ala-2. WD repeat units follow at residues 64-105, 107-146, 149-190, 193-232, 245-284, 290-329, 332-372, 374-413, 419-459, 477-516, 519-560, 562-602, and 604-642; these read EDQE…RLWK, IHTAPVASMAFDATSTLLATGGCDGAVRVWDIVQHYGTHH, GSPG…CLAV, AHYSAVTSLSFSEGGHTMLSSGRDKICIVWDLQSYQTTRT, LPEQPAPALGVKSSGLHFLTAGDQGILRVWEAASGQCVYT, GLRQELTHCTLARAADLLLTVTADHNLLLYEAHSLQLQKQ, GYSE…CQIL, GHTDIVLALDVFRKGWLFASCAKDQSIRIWKMNKAGQVAC, GHTH…LAKS, CHDKDINSLAVSPNDKLLATGSQDRTAKLWALPQCQLLGV, GHRR…KTFE, HDAS…RTLD, and HEDKVWGLHCSQLDDHAITGGSDSRIILWKDVTEAEQAE. Ser-257 is modified (phosphoserine). Residue Lys-407 forms a Glycyl lysine isopeptide (Lys-Gly) (interchain with G-Cter in SUMO2) linkage.

In terms of assembly, part of the small subunit (SSU) processome, composed of more than 70 proteins and the RNA chaperone small nucleolar RNA (snoRNA) U3.

The protein localises to the nucleus. It localises to the nucleolus. Part of the small subunit (SSU) processome, first precursor of the small eukaryotic ribosomal subunit. During the assembly of the SSU processome in the nucleolus, many ribosome biogenesis factors, an RNA chaperone and ribosomal proteins associate with the nascent pre-rRNA and work in concert to generate RNA folding, modifications, rearrangements and cleavage as well as targeted degradation of pre-ribosomal RNA by the RNA exosome. This is Transducin beta-like protein 3 (Tbl3) from Mus musculus (Mouse).